Consider the following 222-residue polypeptide: L-serine dehydratase, beta chain (222 aa).

Positions 150-222 constitute an ACT domain; it reads TILLEYPEQR…RFTTAKYVEV (73 aa).

It belongs to the iron-sulfur dependent L-serine dehydratase family. As to quaternary structure, heterooctamer of four alpha chains and four beta chains. It depends on [4Fe-4S] cluster as a cofactor.

It catalyses the reaction L-serine = pyruvate + NH4(+). It functions in the pathway carbohydrate biosynthesis; gluconeogenesis. The protein is L-serine dehydratase, beta chain (sdhB) of Peptoniphilus asaccharolyticus (Peptostreptococcus asaccharolyticus).